The primary structure comprises 117 residues: MHELSIAQSLLALIEDEMAKHGKEKLITVKVRHGRLSSVVPEALSMAFEVMTADSRLAGAALVMEETPVLLRCRDCSREFTPDPPTAAFAPCPGCGQELGHTVVSGRELYIEYLELE.

Residue His2 participates in Ni(2+) binding. The Zn(2+) site is built by Cys73, Cys76, Cys92, and Cys95.

It belongs to the HypA/HybF family.

Its function is as follows. Involved in the maturation of [NiFe] hydrogenases. Required for nickel insertion into the metal center of the hydrogenase. The sequence is that of Hydrogenase maturation factor HypA from Solidesulfovibrio magneticus (strain ATCC 700980 / DSM 13731 / RS-1) (Desulfovibrio magneticus).